The sequence spans 864 residues: Leucine--tRNA ligase (864 aa).

The short motif at 42-52 (PYPSGKLHMGH) is the 'HIGH' region element. Residues 624 to 628 (KMSKS) carry the 'KMSKS' region motif. Residue K627 participates in ATP binding.

It belongs to the class-I aminoacyl-tRNA synthetase family.

The protein resides in the cytoplasm. The enzyme catalyses tRNA(Leu) + L-leucine + ATP = L-leucyl-tRNA(Leu) + AMP + diphosphate. The protein is Leucine--tRNA ligase of Burkholderia lata (strain ATCC 17760 / DSM 23089 / LMG 22485 / NCIMB 9086 / R18194 / 383).